We begin with the raw amino-acid sequence, 268 residues long: Indole-3-glycerol phosphate synthase (268 aa).

It belongs to the TrpC family.

The catalysed reaction is 1-(2-carboxyphenylamino)-1-deoxy-D-ribulose 5-phosphate + H(+) = (1S,2R)-1-C-(indol-3-yl)glycerol 3-phosphate + CO2 + H2O. The protein operates within amino-acid biosynthesis; L-tryptophan biosynthesis; L-tryptophan from chorismate: step 4/5. This is Indole-3-glycerol phosphate synthase from Magnetococcus marinus (strain ATCC BAA-1437 / JCM 17883 / MC-1).